A 153-amino-acid chain; its full sequence is Nuclear cap-binding protein subunit 2 (153 aa).

Residues Y17, Y40, 109-113 (RTDWD), 120-124 (RQYGR), and 130-131 (QV) each bind mRNA. The RRM domain maps to 37 to 115 (CTLYVGNLSF…RIVRTDWDAG (79 aa)).

It belongs to the RRM NCBP2 family. As to quaternary structure, component of the nuclear cap-binding complex (CBC), a heterodimer composed of ncbp1/cbp80 and ncbp2/cbp20 that interacts with m7GpppG-capped RNA.

The protein resides in the nucleus. It is found in the cytoplasm. Its function is as follows. Component of the cap-binding complex (CBC), which binds co-transcriptionally to the 5' cap of pre-mRNAs and is involved in various processes such as pre-mRNA splicing, translation regulation, nonsense-mediated mRNA decay, RNA-mediated gene silencing (RNAi) by microRNAs (miRNAs) and mRNA export. The CBC complex is involved in mRNA export from the nucleus, leading to the recruitment of the mRNA export machinery to the 5' end of mRNA and to mRNA export in a 5' to 3' direction through the nuclear pore. The CBC complex is also involved in mediating U snRNA and intronless mRNAs export from the nucleus. The CBC complex is essential for a pioneer round of mRNA translation, before steady state translation when the CBC complex is replaced by cytoplasmic cap-binding protein eIF4E. The pioneer round of mRNA translation mediated by the CBC complex plays a central role in nonsense-mediated mRNA decay (NMD), NMD only taking place in mRNAs bound to the CBC complex, but not on eIF4E-bound mRNAs. The CBC complex enhances NMD in mRNAs containing at least one exon-junction complex (EJC), promoting the interaction between upf1 and upf2. The CBC complex is also involved in 'failsafe' NMD, which is independent of the EJC complex, while it does not participate in Staufen-mediated mRNA decay (SMD). During cell proliferation, the CBC complex is also involved in microRNAs (miRNAs) biogenesis via its interaction with srrt/ars2, thereby being required for miRNA-mediated RNA interference. The CBC complex also acts as a negative regulator of parn, thereby acting as an inhibitor of mRNA deadenylation. In the CBC complex, ncbp2/cbp20 recognizes and binds capped RNAs (m7GpppG-capped RNA) but requires ncbp1/cbp80 to stabilize the movement of its N-terminal loop and lock the CBC into a high affinity cap-binding state with the cap structure. The conventional cap-binding complex with NCBP2 binds both small nuclear RNA (snRNA) and messenger (mRNA) and is involved in their export from the nucleus. The polypeptide is Nuclear cap-binding protein subunit 2 (ncbp2) (Xenopus laevis (African clawed frog)).